The primary structure comprises 298 residues: ATP synthase F(1) complex subunit gamma, mitochondrial (298 aa).

A mitochondrion-targeting transit peptide spans 1–25 (MFSRASVVGLSACAVQPQWIQVRNM). At K39 the chain carries N6-acetyllysine. N6-succinyllysine is present on K49. K55 is subject to N6-acetyllysine. K115 bears the N6-acetyllysine; alternate mark. K115 bears the N6-succinyllysine; alternate mark. Residue K138 is modified to N6-acetyllysine. Position 146 is a phosphoserine (S146). K154 bears the N6-acetyllysine; alternate mark. The residue at position 154 (K154) is an N6-succinyllysine; alternate. K197 bears the N6-acetyllysine mark. At K270 the chain carries N6-succinyllysine.

It belongs to the ATPase gamma chain family. In terms of assembly, component of the ATP synthase complex composed at least of ATP5F1A/subunit alpha, ATP5F1B/subunit beta, ATP5MC1/subunit c (homooctomer), MT-ATP6/subunit a, MT-ATP8/subunit 8, ATP5ME/subunit e, ATP5MF/subunit f, ATP5MG/subunit g, ATP5MK/subunit k, ATP5MJ/subunit j, ATP5F1C/subunit gamma, ATP5F1D/subunit delta, ATP5F1E/subunit epsilon, ATP5PF/subunit F6, ATP5PB/subunit b, ATP5PD/subunit d, ATP5PO/subunit OSCP. ATP synthase complex consists of a soluble F(1) head domain (subunits alpha(3) and beta(3)) - the catalytic core - and a membrane F(0) domain - the membrane proton channel (subunits c, a, 8, e, f, g, k and j). These two domains are linked by a central stalk (subunits gamma, delta, and epsilon) rotating inside the F1 region and a stationary peripheral stalk (subunits F6, b, d, and OSCP). Interacts with FLVCR2; this interaction occurs in the absence of heme and is disrupted upon heme binding.

It localises to the mitochondrion inner membrane. Subunit gamma, of the mitochondrial membrane ATP synthase complex (F(1)F(0) ATP synthase or Complex V) that produces ATP from ADP in the presence of a proton gradient across the membrane which is generated by electron transport complexes of the respiratory chain. ATP synthase complex consist of a soluble F(1) head domain - the catalytic core - and a membrane F(1) domain - the membrane proton channel. These two domains are linked by a central stalk rotating inside the F(1) region and a stationary peripheral stalk. During catalysis, ATP synthesis in the catalytic domain of F(1) is coupled via a rotary mechanism of the central stalk subunits to proton translocation. In vivo, can only synthesize ATP although its ATP hydrolase activity can be activated artificially in vitro. With the central stalk subunit delta, is essential for the biogenesis of F(1) catalytic part of the ATP synthase complex namely in the formation of F1 assembly intermediate. This is ATP synthase F(1) complex subunit gamma, mitochondrial from Mus musculus (Mouse).